Consider the following 335-residue polypeptide: MPRRYLLDFEKPLVELEKQIEQIRELARDSEVDVSQQLLQLETLATRRREEIFRSLTPAQKIQVARHPQRPSTLDFIQMFCDDWIELHGDRNGGDDMALIGGLGSVNNQPVLLLGHQKGRDTKENVVRNFGMAKPGGYRKALRLMQHADRFSLPILTFIDTPGAYAGLSAEEQGQGEAIARNLREMFGFKVPIIATIIGEGGSGGALGIGVADRLLMFEHSVYTVASPEACASILWRDAAKASEAATALKITGKDLLELGVIDEVLSEPAGGNNWAPIEAGNTLKGAIEKHLNELLELKKEELLEQRYSKFRVLGKFVESNNFEEIQEQLPQITE.

In terms of domain architecture, CoA carboxyltransferase C-terminal spans 40 to 294 (QLETLATRRR…KGAIEKHLNE (255 aa)).

This sequence belongs to the AccA family. In terms of assembly, acetyl-CoA carboxylase is a heterohexamer composed of biotin carboxyl carrier protein (AccB), biotin carboxylase (AccC) and two subunits each of ACCase subunit alpha (AccA) and ACCase subunit beta (AccD).

Its subcellular location is the cytoplasm. It catalyses the reaction N(6)-carboxybiotinyl-L-lysyl-[protein] + acetyl-CoA = N(6)-biotinyl-L-lysyl-[protein] + malonyl-CoA. Its pathway is lipid metabolism; malonyl-CoA biosynthesis; malonyl-CoA from acetyl-CoA: step 1/1. Functionally, component of the acetyl coenzyme A carboxylase (ACC) complex. First, biotin carboxylase catalyzes the carboxylation of biotin on its carrier protein (BCCP) and then the CO(2) group is transferred by the carboxyltransferase to acetyl-CoA to form malonyl-CoA. This chain is Acetyl-coenzyme A carboxylase carboxyl transferase subunit alpha, found in Prochlorococcus marinus subsp. pastoris (strain CCMP1986 / NIES-2087 / MED4).